Here is a 282-residue protein sequence, read N- to C-terminus: Nicotianamine synthase-like 5 protein (282 aa).

The protein belongs to the nicotianamine synthase (NAS)-like family.

The sequence is that of Nicotianamine synthase-like 5 protein (NAS5) from Hordeum vulgare (Barley).